Reading from the N-terminus, the 196-residue chain is uncharacterized protein (196 aa).

The tract at residues Arg44 to Ala80 is disordered.

This is an uncharacterized protein from Treponema pallidum (strain Nichols).